A 70-amino-acid chain; its full sequence is ATP synthase subunit c (70 aa).

2 consecutive transmembrane segments (helical) span residues 4–24 (IATAIIIGLGALGAGIGNGLI) and 47–67 (FIGIGLVEALPIIGVAVGFLL).

This sequence belongs to the ATPase C chain family. As to quaternary structure, F-type ATPases have 2 components, F(1) - the catalytic core - and F(0) - the membrane proton channel. F(1) has five subunits: alpha(3), beta(3), gamma(1), delta(1), epsilon(1). F(0) has three main subunits: a(1), b(2) and c(10-14). The alpha and beta chains form an alternating ring which encloses part of the gamma chain. F(1) is attached to F(0) by a central stalk formed by the gamma and epsilon chains, while a peripheral stalk is formed by the delta and b chains.

It localises to the cell membrane. F(1)F(0) ATP synthase produces ATP from ADP in the presence of a proton or sodium gradient. F-type ATPases consist of two structural domains, F(1) containing the extramembraneous catalytic core and F(0) containing the membrane proton channel, linked together by a central stalk and a peripheral stalk. During catalysis, ATP synthesis in the catalytic domain of F(1) is coupled via a rotary mechanism of the central stalk subunits to proton translocation. In terms of biological role, key component of the F(0) channel; it plays a direct role in translocation across the membrane. A homomeric c-ring of between 10-14 subunits forms the central stalk rotor element with the F(1) delta and epsilon subunits. The polypeptide is ATP synthase subunit c (Exiguobacterium sibiricum (strain DSM 17290 / CCUG 55495 / CIP 109462 / JCM 13490 / 255-15)).